Reading from the N-terminus, the 674-residue chain is Pre-mRNA-splicing factor cwf4 (674 aa).

HAT repeat units lie at residues 50 to 82 (EFQG…WELD), 84 to 116 (KEFA…CEMK), 118 to 150 (RNIN…MEEM), 152 to 183 (GNIT…MERR), 185 to 216 (HENE…FEEE), 218 to 253 (GNAA…FEIR), 255 to 289 (KEYE…FEKQ), 299 to 331 (TVLD…LEES), 333 to 367 (GDIN…IWLN), 377 to 413 (KDVD…FELR), 415 to 446 (RKID…FEDA), 448 to 480 (KQFD…LETK), 482 to 516 (GDSD…FEFE), 518 to 549 (MEYG…FEIA), 567 to 608 (TAVV…MHGT), and 610 to 643 (DTRK…YLFP).

This sequence belongs to the crooked-neck family. As to quaternary structure, belongs to the 40S cdc5-associated complex (or cwf complex), a spliceosome sub-complex reminiscent of a late-stage spliceosome composed of the U2, U5 and U6 snRNAs and at least brr2, cdc5, cwf2/prp3, cwf3/syf1, cwf4/syf3, cwf5/ecm2, spp42/cwf6, cwf7/spf27, cwf8, cwf9, cwf10, cwf11, cwf12, prp45/cwf13, cwf14, cwf15, cwf16, cwf17, cwf18, cwf19, cwf20, cwf21, cwf22, cwf23, cwf24, cwf25, cwf26, cyp7/cwf27, cwf28, cwf29/ist3, lea1, msl1, prp5/cwf1, prp10, prp12/sap130, prp17, prp22, sap61, sap62, sap114, sap145, slu7, smb1, smd1, smd3, smf1, smg1 and syf2.

The protein resides in the nucleus. In terms of biological role, involved in pre-mRNA splicing and cell cycle progression. Required for the spliceosome assembly and initiation of the DNA replication. This Schizosaccharomyces pombe (strain 972 / ATCC 24843) (Fission yeast) protein is Pre-mRNA-splicing factor cwf4 (cwf4).